Consider the following 160-residue polypeptide: Fluoride-specific ion channel FluC (160 aa).

Transmembrane regions (helical) follow at residues 5-25, 34-54, 67-87, and 99-119; these read LFIS…GLLF, FGTL…LGLF, FLIT…SEVV, and FCVL…GIWI. Na(+)-binding residues include G74 and T77.

The protein belongs to the fluoride channel Fluc/FEX (TC 1.A.43) family.

The protein resides in the cell inner membrane. It carries out the reaction fluoride(in) = fluoride(out). Na(+) is not transported, but it plays an essential structural role and its presence is essential for fluoride channel function. In terms of biological role, fluoride-specific ion channel. Important for reducing fluoride concentration in the cell, thus reducing its toxicity. In Haemophilus influenzae (strain ATCC 51907 / DSM 11121 / KW20 / Rd), this protein is Fluoride-specific ion channel FluC.